The chain runs to 496 residues: UDP-glycosyltransferase 73C2 (496 aa).

Residues serine 297, 357–359, 374–382, and 396–399 contribute to the UDP-alpha-D-glucose site; these read SPQ, HCGWNSTLE, and FGDQ.

This sequence belongs to the UDP-glycosyltransferase family.

This Arabidopsis thaliana (Mouse-ear cress) protein is UDP-glycosyltransferase 73C2 (UGT73C2).